The sequence spans 873 residues: Bifunctional uridylyltransferase/uridylyl-removing enzyme (873 aa).

A uridylyltransferase region spans residues 1–332 (MAFQSPLTFN…NGGETEPAVI (332 aa)). A uridylyl-removing region spans residues 333–692 (INEDFQRRGR…MSKKATRGGT (360 aa)). The 123-residue stretch at 451–573 (VDEHSVRLLN…VRDEERLEYL (123 aa)) folds into the HD domain. ACT domains follow at residues 693-773 (EVFV…VKTR) and 800-873 (LMEL…ELAP).

This sequence belongs to the GlnD family. Mg(2+) serves as cofactor.

The catalysed reaction is [protein-PII]-L-tyrosine + UTP = [protein-PII]-uridylyl-L-tyrosine + diphosphate. The enzyme catalyses [protein-PII]-uridylyl-L-tyrosine + H2O = [protein-PII]-L-tyrosine + UMP + H(+). Uridylyltransferase (UTase) activity is inhibited by glutamine, while glutamine activates uridylyl-removing (UR) activity. Its function is as follows. Modifies, by uridylylation and deuridylylation, the PII regulatory proteins (GlnB and homologs), in response to the nitrogen status of the cell that GlnD senses through the glutamine level. Under low glutamine levels, catalyzes the conversion of the PII proteins and UTP to PII-UMP and PPi, while under higher glutamine levels, GlnD hydrolyzes PII-UMP to PII and UMP (deuridylylation). Thus, controls uridylylation state and activity of the PII proteins, and plays an important role in the regulation of nitrogen assimilation and metabolism. The sequence is that of Bifunctional uridylyltransferase/uridylyl-removing enzyme from Vibrio vulnificus (strain CMCP6).